The primary structure comprises 213 residues: Motile sperm domain-containing protein 1 (213 aa).

The 128-residue stretch at 16–143 (PVFVFPTELI…KEHLTESLFF (128 aa)) folds into the MSP domain. Transmembrane regions (helical) follow at residues 159-179 (SLLT…PTLG) and 191-211 (LSVN…MAIL). A Nuclear export signal motif is present at residues 205–208 (LITM).

The protein localises to the endoplasmic reticulum membrane. Its subcellular location is the golgi apparatus membrane. Plays a role in differentiation and/or proliferation of mesenchymal stem cells. Proposed to be involved in epithelial-to-mesenchymal transition (EMT). However, another study suggests that it is not required for EMT or stem cell self-renewal and acts during later stages of differentiation. The chain is Motile sperm domain-containing protein 1 (MOSPD1) from Pongo abelii (Sumatran orangutan).